The primary structure comprises 43 residues: Protein PsbN (43 aa).

A helical membrane pass occupies residues A4 to Y24.

It belongs to the PsbN family.

The protein resides in the cellular thylakoid membrane. Functionally, may play a role in photosystem I and II biogenesis. The protein is Protein PsbN of Trichormus variabilis (strain ATCC 29413 / PCC 7937) (Anabaena variabilis).